The chain runs to 358 residues: WD repeat-containing protein 53 (358 aa).

5 WD repeats span residues 8-46, 92-131, 134-174, 195-234, and 239-278; these read GHSSPILCLNASQEGLVASGAEGGDLVVWGEDGTLLGHT, VNEEEINCLSLNETENLLASADDSGTIKILDLENKKISRS, RHSN…PLWI, LNPALAHSVSVASCGNVFSCGAEDGKVRIFRVMGVKCEQE, and GHSLGVSQVCFLRESYLLLTGGNDGKIKLWDVSSEIEKKH. The span at 278–294 shows a compositional bias: basic residues; the sequence is HKSPTKHTHRKKTKRAA. The disordered stretch occupies residues 278–309; the sequence is HKSPTKHTHRKKTKRAAYTKQGGGTHASVTGE.

It belongs to the WD repeat WDR53 family.

This Bos taurus (Bovine) protein is WD repeat-containing protein 53 (WDR53).